Here is a 229-residue protein sequence, read N- to C-terminus: Prolactin (229 aa).

The signal sequence occupies residues methionine 1 to serine 30. An intrachain disulfide couples cysteine 34 to cysteine 41. 3 positions are modified to phosphoserine: serine 56, serine 64, and serine 120. 2 cysteine pairs are disulfide-bonded: cysteine 88/cysteine 204 and cysteine 221/cysteine 229.

It belongs to the somatotropin/prolactin family. Interacts with PRLR.

The protein localises to the secreted. Functionally, prolactin acts primarily on the mammary gland by promoting lactation. This Ailuropoda melanoleuca (Giant panda) protein is Prolactin (PRL).